The chain runs to 112 residues: Small ribosomal subunit protein eS24 (112 aa).

The disordered stretch occupies residues 88-112 (RGMAGEEEGNADAQDAPSGDAAEAS).

It belongs to the eukaryotic ribosomal protein eS24 family.

The polypeptide is Small ribosomal subunit protein eS24 (Methanospirillum hungatei JF-1 (strain ATCC 27890 / DSM 864 / NBRC 100397 / JF-1)).